The following is a 256-amino-acid chain: MRVALRVAYDGSRYHGFQYQPDVPTIEGALRKALSELGLELVGYASRTDAGAHARYQVVVVEGDPELAQPDPINARLPKDIRVIAKTEVHEEFDPRRDALRKEYRYFLGPLNRPEAAARAARKLEGKHDFSAFRREDGRNPIITVERCELVEITPNAYVLRVVAPRFLWEMVRRIAGFVWEVGHGLREEGDAEALLSGKFEPSKKPRCLPAEGLILWHIEYDEVRFERTKAWFEDHKVIQLGGRLLLRLPEGAESC.

Asp-49 functions as the Nucleophile in the catalytic mechanism. Tyr-104 lines the substrate pocket.

The protein belongs to the tRNA pseudouridine synthase TruA family.

The catalysed reaction is uridine(38/39/40) in tRNA = pseudouridine(38/39/40) in tRNA. Functionally, formation of pseudouridine at positions 38, 39 and 40 in the anticodon stem and loop of transfer RNAs. The polypeptide is tRNA pseudouridine synthase A (Methanopyrus kandleri (strain AV19 / DSM 6324 / JCM 9639 / NBRC 100938)).